The primary structure comprises 424 residues: Double-stranded RNA-binding protein 8 (424 aa).

Positions Met-1–Pro-10 are enriched in pro residues. The tract at residues Met-1–Ala-22 is disordered. 2 DRBM domains span residues Val-33–Lys-102 and Leu-118–Gly-185. Composition is skewed to basic and acidic residues over residues Lys-287–His-308 and Asp-318–Arg-328. The segment at Lys-287 to Ile-330 is disordered.

Binds double-stranded RNA. In Oryza sativa subsp. japonica (Rice), this protein is Double-stranded RNA-binding protein 8 (DRB8).